The primary structure comprises 190 residues: Interferon alpha-7 (190 aa).

The N-terminal stretch at 1 to 23 is a signal peptide; that stretch reads MARLCAFLMVLAVMSYWPTCCLG. 2 disulfide bridges follow: Cys-24/Cys-122 and Cys-52/Cys-162. N-linked (GlcNAc...) asparagine glycosylation is present at Asn-101.

Belongs to the alpha/beta interferon family.

Its subcellular location is the secreted. Functionally, produced by macrophages, IFN-alpha have antiviral activities. Interferon stimulates the production of two enzymes: a protein kinase and an oligoadenylate synthetase. This chain is Interferon alpha-7 (Ifna7), found in Mus musculus (Mouse).